Here is a 418-residue protein sequence, read N- to C-terminus: Serine hydroxymethyltransferase (418 aa).

(6S)-5,6,7,8-tetrahydrofolate is bound by residues leucine 121 and 125-127 (GHL). Position 230 is an N6-(pyridoxal phosphate)lysine (lysine 230). 356 to 358 (SPF) is a binding site for (6S)-5,6,7,8-tetrahydrofolate.

The protein belongs to the SHMT family. Homodimer. It depends on pyridoxal 5'-phosphate as a cofactor.

It localises to the cytoplasm. It catalyses the reaction (6R)-5,10-methylene-5,6,7,8-tetrahydrofolate + glycine + H2O = (6S)-5,6,7,8-tetrahydrofolate + L-serine. Its pathway is one-carbon metabolism; tetrahydrofolate interconversion. The protein operates within amino-acid biosynthesis; glycine biosynthesis; glycine from L-serine: step 1/1. In terms of biological role, catalyzes the reversible interconversion of serine and glycine with tetrahydrofolate (THF) serving as the one-carbon carrier. This reaction serves as the major source of one-carbon groups required for the biosynthesis of purines, thymidylate, methionine, and other important biomolecules. Also exhibits THF-independent aldolase activity toward beta-hydroxyamino acids, producing glycine and aldehydes, via a retro-aldol mechanism. This Shewanella sediminis (strain HAW-EB3) protein is Serine hydroxymethyltransferase.